Consider the following 345-residue polypeptide: Phosphoribosylformylglycinamidine cyclo-ligase (345 aa).

The protein belongs to the AIR synthase family.

It localises to the cytoplasm. It catalyses the reaction 2-formamido-N(1)-(5-O-phospho-beta-D-ribosyl)acetamidine + ATP = 5-amino-1-(5-phospho-beta-D-ribosyl)imidazole + ADP + phosphate + H(+). It functions in the pathway purine metabolism; IMP biosynthesis via de novo pathway; 5-amino-1-(5-phospho-D-ribosyl)imidazole from N(2)-formyl-N(1)-(5-phospho-D-ribosyl)glycinamide: step 2/2. This chain is Phosphoribosylformylglycinamidine cyclo-ligase, found in Escherichia coli O139:H28 (strain E24377A / ETEC).